Consider the following 98-residue polypeptide: Cystatin-B (98 aa).

N-acetylmethionine is present on Met1. Positions 46-50 (QVVAG) match the Secondary area of contact motif.

It belongs to the cystatin family. As to quaternary structure, able to form dimers stabilized by noncovalent forces.

It is found in the cytoplasm. It localises to the nucleus. In terms of biological role, this is an intracellular thiol proteinase inhibitor. Tightly binding reversible inhibitor of cathepsins L, H and B. This is Cystatin-B (CSTB) from Pongo pygmaeus (Bornean orangutan).